A 210-amino-acid chain; its full sequence is 3-demethoxyubiquinol 3-hydroxylase (210 aa).

Residues Glu59, Glu89, His92, Glu141, Glu173, and His176 each contribute to the Fe cation site.

This sequence belongs to the COQ7 family. The cofactor is Fe cation.

Its subcellular location is the cell membrane. The catalysed reaction is a 5-methoxy-2-methyl-3-(all-trans-polyprenyl)benzene-1,4-diol + AH2 + O2 = a 3-demethylubiquinol + A + H2O. Its pathway is cofactor biosynthesis; ubiquinone biosynthesis. Its function is as follows. Catalyzes the hydroxylation of 2-nonaprenyl-3-methyl-6-methoxy-1,4-benzoquinol during ubiquinone biosynthesis. This is 3-demethoxyubiquinol 3-hydroxylase from Albidiferax ferrireducens (strain ATCC BAA-621 / DSM 15236 / T118) (Rhodoferax ferrireducens).